The sequence spans 94 residues: Preprofallaxidin-9 (94 aa).

The N-terminal stretch at M1–C22 is a signal peptide. Positions E23–R46 are excised as a propeptide. The segment at R27–R46 is disordered. A compositionally biased stretch (acidic residues) spans E30 to S42. Leucine amide is present on L62. The propeptide occupies S66–R70. A Methionine amide modification is found at M75. The propeptide occupies S79–R83. M88 is subject to Methionine amide. Residues S92–E94 constitute a propeptide that is removed on maturation.

The protein belongs to the frog skin active peptide (FSAP) family. Brevinin subfamily. As to expression, expressed by the skin glands.

It localises to the secreted. Functionally, fallaxidin-1.3 shows no antibacterial activity against Gram-positive or Gram-negative bacteria. Does not inhibit the formation of NO by neuronal nitric oxide synthase. Has no effect on splenocyte proliferation or smooth muscle contraction. Its function is as follows. Fallaxidin-3.2 shows antibacterial activity against the Gram-positive bacteria E.faecalis (MIC=100 uM) and L.lactis (MIC=500 uM). No antibacterial activity against the Gram-positive bacteria B.cereus, L.innocua, M.luteus, S.epidermidis, S.uberis and S.aureus, or the Gram-negative bacteria E.cloacae and E.coli. The polypeptide is Preprofallaxidin-9 (Litoria fallax (Eastern dwarf tree frog)).